Consider the following 66-residue polypeptide: UPF0457 protein BA_2525/GBAA_2525/BAS2348 (66 aa).

It belongs to the UPF0457 family.

The chain is UPF0457 protein BA_2525/GBAA_2525/BAS2348 from Bacillus anthracis.